The chain runs to 247 residues: Inhibitory synaptic factor 1 (247 aa).

A coiled-coil region spans residues 30-65 (RAVIGQLEGILRDLKEVAKELKEVVEQIDRLTSDFE). Disordered stretches follow at residues 69-90 (DTDDWTPGTVSSTSSSEKGGPL), 112-166 (ASTP…RDRV), and 180-217 (DDSEDPPYGQETPRDPPRATAPCAVMKSKPGGLTGVRK). Residues 76 to 85 (GTVSSTSSSE) show a composition bias toward polar residues.

This sequence belongs to the INSYN1 family.

The protein resides in the postsynaptic density. Functionally, may be a component of the protein machinery at the inhibitory synapses, probably acting as a scaffold. This chain is Inhibitory synaptic factor 1, found in Xenopus laevis (African clawed frog).